The following is a 448-amino-acid chain: Trigger factor (448 aa).

Positions 162–243 (DDFAIIDIEA…VQQTKERKLP (82 aa)) constitute a PPIase FKBP-type domain. Positions 426 to 448 (DEGKAVDPSEYFGEEEESAEESE) are disordered. Over residues 437 to 448 (FGEEEESAEESE) the composition is skewed to acidic residues.

This sequence belongs to the FKBP-type PPIase family. Tig subfamily.

The protein localises to the cytoplasm. The catalysed reaction is [protein]-peptidylproline (omega=180) = [protein]-peptidylproline (omega=0). In terms of biological role, involved in protein export. Acts as a chaperone by maintaining the newly synthesized protein in an open conformation. Functions as a peptidyl-prolyl cis-trans isomerase. The chain is Trigger factor from Corynebacterium diphtheriae (strain ATCC 700971 / NCTC 13129 / Biotype gravis).